Here is a 490-residue protein sequence, read N- to C-terminus: Aspartyl/glutamyl-tRNA(Asn/Gln) amidotransferase subunit B (490 aa).

This sequence belongs to the GatB/GatE family. GatB subfamily. In terms of assembly, heterotrimer of A, B and C subunits.

It carries out the reaction L-glutamyl-tRNA(Gln) + L-glutamine + ATP + H2O = L-glutaminyl-tRNA(Gln) + L-glutamate + ADP + phosphate + H(+). It catalyses the reaction L-aspartyl-tRNA(Asn) + L-glutamine + ATP + H2O = L-asparaginyl-tRNA(Asn) + L-glutamate + ADP + phosphate + 2 H(+). Allows the formation of correctly charged Asn-tRNA(Asn) or Gln-tRNA(Gln) through the transamidation of misacylated Asp-tRNA(Asn) or Glu-tRNA(Gln) in organisms which lack either or both of asparaginyl-tRNA or glutaminyl-tRNA synthetases. The reaction takes place in the presence of glutamine and ATP through an activated phospho-Asp-tRNA(Asn) or phospho-Glu-tRNA(Gln). The protein is Aspartyl/glutamyl-tRNA(Asn/Gln) amidotransferase subunit B of Zymomonas mobilis subsp. mobilis (strain ATCC 31821 / ZM4 / CP4).